The following is a 378-amino-acid chain: Zinc finger protein DPF3 (378 aa).

A Glycyl lysine isopeptide (Lys-Gly) (interchain with G-Cter in SUMO2) cross-link involves residue Lys-99. A disordered region spans residues 146–193; that stretch reads LENDENVEEGNEEEDLEEDVPKRKNRTRGRARGSAGGRRRHDAASQED. The segment covering 148–163 has biased composition (acidic residues); that stretch reads NDENVEEGNEEEDLEE. The span at 168–186 shows a compositional bias: basic residues; that stretch reads RKNRTRGRARGSAGGRRRH. A C2H2-type zinc finger spans residues 198–221; sequence YVCDICGKRYKNRPGLSYHYAHTH. The segment at 225 to 254 is disordered; it reads EEGDEAQDQETRSPPNHRNENHRPQKGPDG. 2 consecutive PHD-type zinc fingers follow at residues 259–319 and 316–366; these read NNYC…CKSC and CKSC…CWEL. The interaction with HDGFL2 stretch occupies residues 317 to 332; the sequence is KSCILCGTSENDDQLL. Gly-323 bears the Phosphoserine mark.

The protein belongs to the requiem/DPF family. In terms of assembly, component of the BAF complex, which includes at least actin (ACTB), ARID1A, ARID1B/BAF250, SMARCA2, SMARCA4/BRG1/BAF190A, ACTL6A/BAF53, ACTL6B/BAF53B, SMARCE1/BAF57, SMARCC1/BAF155, SMARCC2/BAF170, SMARCB1/SNF5/INI1, and one or more of SMARCD1/BAF60A, SMARCD2/BAF60B, or SMARCD3/BAF60C. In muscle cells, the BAF complex also contains DPF3. Interacts with acetylated histones H3 and H4. Component of neuron-specific chromatin remodeling complex (nBAF complex) composed of at least, ARID1A/BAF250A or ARID1B/BAF250B, SMARCD1/BAF60A, SMARCD3/BAF60C, SMARCA2/BRM/BAF190B, SMARCA4/BRG1/BAF190A, SMARCB1/BAF47, SMARCC1/BAF155, SMARCE1/BAF57, SMARCC2/BAF170, DPF1/BAF45B, DPF3/BAF45C, ACTL6B/BAF53B and actin. As to quaternary structure, interacts with HDGFL2. Interacts with SMARCA4/BRG1/BAF190A, SMARCC1/BAF155 and SMARCD1/BAF60A. Expressed in the heart and somites. Expressed in cerebellum and spinal cord, but not in cerebral cortex. Expressed specifically in post-mitotic neurons (at protein level).

Its subcellular location is the nucleus. Functionally, muscle-specific component of the BAF complex, a multiprotein complex involved in transcriptional activation and repression of select genes by chromatin remodeling (alteration of DNA-nucleosome topology). Specifically binds acetylated lysines on histone 3 and 4 (H3K14ac, H3K9ac, H4K5ac, H4K8ac, H4K12ac, H4K16ac). In the complex, it acts as a tissue-specific anchor between histone acetylations and methylations and chromatin remodeling. It thereby probably plays an essential role in heart and skeletal muscle development. Belongs to the neuron-specific chromatin remodeling complex (nBAF complex). During neural development a switch from a stem/progenitor to a post-mitotic chromatin remodeling mechanism occurs as neurons exit the cell cycle and become committed to their adult state. The transition from proliferating neural stem/progenitor cells to post-mitotic neurons requires a switch in subunit composition of the npBAF and nBAF complexes. As neural progenitors exit mitosis and differentiate into neurons, npBAF complexes which contain ACTL6A/BAF53A and PHF10/BAF45A, are exchanged for homologous alternative ACTL6B/BAF53B and DPF1/BAF45B or DPF3/BAF45C subunits in neuron-specific complexes (nBAF). The npBAF complex is essential for the self-renewal/proliferative capacity of the multipotent neural stem cells. The nBAF complex along with CREST plays a role regulating the activity of genes essential for dendrite growth. Acts as a regulator of myogenesis in cooperation with HDGFL2. Mediates the interaction of HDGFL2 with the BAF complex. HDGFL2-DPF3a activate myogenic genes by increasing chromatin accessibility through recruitment of SMARCA4/BRG1/BAF190A (ATPase subunit of the BAF complex) to myogenic gene promoters. The polypeptide is Zinc finger protein DPF3 (Dpf3) (Mus musculus (Mouse)).